Consider the following 500-residue polypeptide: Probable malate:quinone oxidoreductase (500 aa).

The protein belongs to the MQO family. FAD serves as cofactor.

It carries out the reaction (S)-malate + a quinone = a quinol + oxaloacetate. The protein operates within carbohydrate metabolism; tricarboxylic acid cycle; oxaloacetate from (S)-malate (quinone route): step 1/1. This is Probable malate:quinone oxidoreductase from Gluconobacter oxydans (strain 621H) (Gluconobacter suboxydans).